Consider the following 84-residue polypeptide: MANREGGRRNSGKLRRAKRKVCAFCMDKSEFIDYKDINKLRKYVTERGKILPRRISGNCAKHQRELTRAIKRARNIALLPFTTE.

It belongs to the bacterial ribosomal protein bS18 family. In terms of assembly, part of the 30S ribosomal subunit. Forms a tight heterodimer with protein bS6.

Functionally, binds as a heterodimer with protein bS6 to the central domain of the 16S rRNA, where it helps stabilize the platform of the 30S subunit. The protein is Small ribosomal subunit protein bS18 of Clostridium kluyveri (strain NBRC 12016).